The primary structure comprises 153 residues: MPPLLYRLRSVLADTVAMVIYCFITGMAVEMLLSEMTFQQSLSSRLLSIPVNIVIAWPYGLYRDRIVALLLKWGKNKHGIRNLADLFAYVSFQSPVYAAILWAIGADLSQIVRAVGSNAIISMLMGVVYGYFLEYCRHLFRVPVLNRQRIGSN.

The next 4 membrane-spanning stretches (helical) occupy residues 16–36, 42–62, 86–106, and 114–134; these read VAMV…LSEM, LSSR…YGLY, LFAY…AIGA, and AVGS…YFLE.

Belongs to the AlaE exporter family.

Its subcellular location is the cell inner membrane. In terms of biological role, exports L-alanine. This Musicola paradisiaca (strain Ech703) (Dickeya paradisiaca) protein is L-alanine exporter AlaE.